Reading from the N-terminus, the 201-residue chain is 3-isopropylmalate dehydratase small subunit (201 aa).

The protein belongs to the LeuD family. LeuD type 1 subfamily. In terms of assembly, heterodimer of LeuC and LeuD.

The catalysed reaction is (2R,3S)-3-isopropylmalate = (2S)-2-isopropylmalate. It participates in amino-acid biosynthesis; L-leucine biosynthesis; L-leucine from 3-methyl-2-oxobutanoate: step 2/4. Its function is as follows. Catalyzes the isomerization between 2-isopropylmalate and 3-isopropylmalate, via the formation of 2-isopropylmaleate. The protein is 3-isopropylmalate dehydratase small subunit of Shewanella halifaxensis (strain HAW-EB4).